Consider the following 654-residue polypeptide: Tetracycline resistance protein TetQ (654 aa).

Residues 1–244 enclose the tr-type G domain; the sequence is MNIINLGILA…AISSFILPPE (244 aa). GTP contacts are provided by residues 10-17, 74-78, and 128-131; these read AHIDAGKT, DTPGH, and NKID.

It belongs to the TRAFAC class translation factor GTPase superfamily. Classic translation factor GTPase family. TetM/TetO subfamily.

Abolishes the inhibitory effect of tetracyclin on protein synthesis by a non-covalent modification of the ribosomes. In Prevotella intermedia, this protein is Tetracycline resistance protein TetQ (tetQ).